The chain runs to 145 residues: UPF0735 ACT domain-containing protein CLD_1535 (145 aa).

The ACT domain maps to 69–144 (TIGLLLGHER…NVIKVDLIAM (76 aa)).

It belongs to the UPF0735 family.

This is UPF0735 ACT domain-containing protein CLD_1535 from Clostridium botulinum (strain Okra / Type B1).